The following is a 347-amino-acid chain: Eukaryotic translation initiation factor 3 subunit I (347 aa).

WD repeat units follow at residues 8-47, 50-89, 150-190, 192-233, and 289-328; these read GHER…RLGT, DHSG…AVHS, EQAT…VQAK, IHEK…KTYK, and GHFG…FDFK.

It belongs to the eIF-3 subunit I family. Component of the eukaryotic translation initiation factor 3 (eIF-3) complex.

The protein resides in the cytoplasm. Its function is as follows. Component of the eukaryotic translation initiation factor 3 (eIF-3) complex, which is involved in protein synthesis of a specialized repertoire of mRNAs and, together with other initiation factors, stimulates binding of mRNA and methionyl-tRNAi to the 40S ribosome. The eIF-3 complex specifically targets and initiates translation of a subset of mRNAs involved in cell proliferation. This is Eukaryotic translation initiation factor 3 subunit I from Kluyveromyces lactis (strain ATCC 8585 / CBS 2359 / DSM 70799 / NBRC 1267 / NRRL Y-1140 / WM37) (Yeast).